The primary structure comprises 94 residues: Large ribosomal subunit protein uL23 (94 aa).

Belongs to the universal ribosomal protein uL23 family. In terms of assembly, part of the 50S ribosomal subunit. Contacts protein L29, and trigger factor when it is bound to the ribosome.

One of the early assembly proteins it binds 23S rRNA. One of the proteins that surrounds the polypeptide exit tunnel on the outside of the ribosome. Forms the main docking site for trigger factor binding to the ribosome. In Ligilactobacillus salivarius (strain UCC118) (Lactobacillus salivarius), this protein is Large ribosomal subunit protein uL23.